A 254-amino-acid polypeptide reads, in one-letter code: D-aminoacyl-tRNA deacylase (254 aa).

The interval K61–E83 is disordered. Over residues T65–E74 the composition is skewed to polar residues.

This sequence belongs to the DtdA deacylase family. Monomer. It depends on Zn(2+) as a cofactor.

The catalysed reaction is a D-aminoacyl-tRNA + H2O = a tRNA + a D-alpha-amino acid + H(+). It carries out the reaction glycyl-tRNA(Ala) + H2O = tRNA(Ala) + glycine + H(+). Functionally, D-aminoacyl-tRNA deacylase with broad substrate specificity. By recycling D-aminoacyl-tRNA to D-amino acids and free tRNA molecules, this enzyme counteracts the toxicity associated with the formation of D-aminoacyl-tRNA entities in vivo. The sequence is that of D-aminoacyl-tRNA deacylase from Methanococcus maripaludis (strain C7 / ATCC BAA-1331).